The primary structure comprises 732 residues: Exonuclease 1 (732 aa).

Residues 1–99 are N-domain; that stretch reads MGITGLIPFV…KRRRDSRKQS (99 aa). Aspartate 30, aspartate 78, glutamate 150, aspartate 152, aspartate 171, aspartate 173, and aspartate 226 together coordinate Mg(2+). Positions 138 to 230 are I-domain; sequence RSRNVDCIVA…ILSGCDYLDS (93 aa). 3 disordered regions span residues 422 to 471, 524 to 625, and 661 to 716; these read YSFK…QRSP, DEQT…TNST, and SCSS…VSQN. A phosphoserine mark is found at serine 431 and serine 433. Over residues 432–442 the composition is skewed to basic and acidic residues; sequence PSREDSVDQER. Threonine 443 carries the phosphothreonine modification. Serine 447 is modified (phosphoserine). Basic and acidic residues-rich tracts occupy residues 457–467 and 525–537; these read FAKERTGEEAN and EQTRLQREHLRDT. Polar residues-rich tracts occupy residues 572-593 and 608-625; these read RCSSQISDGETDTDTTASSLLE and DLNNSQPQIPTEGNTNST. Residues 661–677 are compositionally biased toward low complexity; sequence SCSSDQRASSTSSSSQQ. Over residues 703–716 the composition is skewed to polar residues; sequence KSRTNGKLGAVSQN.

It belongs to the XPG/RAD2 endonuclease family. EXO1 subfamily. Requires Mg(2+) as cofactor. In terms of tissue distribution, specifically expressed in the female germline.

It is found in the nucleus. Its function is as follows. 5'-&gt;3' double-stranded DNA exonuclease which may also contain a cryptic 3'-&gt;5' double-stranded DNA exonuclease activity. Also exhibits endonuclease activity against 5'-overhanging flap structures similar to those generated by displacement synthesis when DNA polymerase encounters the 5'-end of a downstream Okazaki fragment. Required for DNA mismatch repair (MMR). The chain is Exonuclease 1 (tos) from Drosophila melanogaster (Fruit fly).